The primary structure comprises 826 residues: Ubiquitin carboxyl-terminal hydrolase 16 (826 aa).

The segment at 22–142 adopts a UBP-type zinc-finger fold; it reads PMCRHIRKGL…QVVDYVRKQA (121 aa). Cysteine 24, histidine 26, cysteine 48, cysteine 51, cysteine 74, cysteine 77, cysteine 82, histidine 90, histidine 94, histidine 103, cysteine 116, and cysteine 119 together coordinate Zn(2+). A Glycyl lysine isopeptide (Lys-Gly) (interchain with G-Cter in SUMO2) cross-link involves residue lysine 140. The interval 146-190 is disordered; the sequence is TPKPAEKDNGNIELENKKLEKESKNEQEREKKENMAKENPPMNSP. Residues 149–181 are compositionally biased toward basic and acidic residues; it reads PAEKDNGNIELENKKLEKESKNEQEREKKENMA. Serine 189 is subject to Phosphoserine. Residues 196-825 form the USP domain; it reads KGLSNLGNTC…QAYLLFYERI (630 aa). Cysteine 205 serves as the catalytic Nucleophile. Basic and acidic residues predominate over residues 394–408; sequence SGKKSVNDKNLKKTM. A disordered region spans residues 394-460; the sequence is SGKKSVNDKN…AKNQRRQQKI (67 aa). Residues 409–420 show a composition bias toward acidic residues; it reads EDEDQDSEEEKD. Serine 415 carries the phosphoserine modification. Basic and acidic residues predominate over residues 421-430; sequence NDSYIKERSD. Residues 438–458 are compositionally biased toward basic residues; the sequence is HLQKKAKKQAKKQAKNQRRQQ. Phosphoserine is present on serine 552. The residue at position 557 (threonine 557) is a Phosphothreonine. Histidine 761 functions as the Proton acceptor in the catalytic mechanism.

It belongs to the peptidase C19 family. USP16 subfamily. As to quaternary structure, homotetramer. Associates with late pre-40S ribosomes. Interacts with CEP78; promoting deubiquitination of tektins. Phosphorylated at the onset of mitosis and dephosphorylated during the metaphase/anaphase transition. Phosphorylation by AURKB enhances the deubiquitinase activity.

The protein resides in the nucleus. It carries out the reaction Thiol-dependent hydrolysis of ester, thioester, amide, peptide and isopeptide bonds formed by the C-terminal Gly of ubiquitin (a 76-residue protein attached to proteins as an intracellular targeting signal).. Its function is as follows. Specifically deubiquitinates 'Lys-120' of histone H2A (H2AK119Ub), a specific tag for epigenetic transcriptional repression, thereby acting as a coactivator. Deubiquitination of histone H2A is a prerequisite for subsequent phosphorylation at 'Ser-11' of histone H3 (H3S10ph), and is required for chromosome segregation when cells enter into mitosis. In resting B- and T-lymphocytes, phosphorylation by AURKB leads to enhance its activity, thereby maintaining transcription in resting lymphocytes. Regulates Hox gene expression via histone H2A deubiquitination. Prefers nucleosomal substrates. Does not deubiquitinate histone H2B. Also deubiquitinates non-histone proteins, such as ribosomal protein RPS27A: deubiquitination of monoubiquitinated RPS27A promotes maturation of the 40S ribosomal subunit. Also mediates deubiquitination of tektin proteins (TEKT1, TEKT2, TEK3, TEKT4 and TEKT5), promoting their stability. The polypeptide is Ubiquitin carboxyl-terminal hydrolase 16 (Macaca fascicularis (Crab-eating macaque)).